Reading from the N-terminus, the 171-residue chain is Sec-independent protein translocase protein TatB (171 aa).

Residues 1–21 (MFDIGFSELLLVFIIGLVVLG) traverse the membrane as a helical segment. The segment at 117–171 (KDNEAAHEGVTPAAAQTQASSPEQKPETTPEPVVKPAADAEPKTAAPSPSSSDKP) is disordered. Polar residues predominate over residues 130-139 (AAQTQASSPE).

The protein belongs to the TatB family. As to quaternary structure, the Tat system comprises two distinct complexes: a TatABC complex, containing multiple copies of TatA, TatB and TatC subunits, and a separate TatA complex, containing only TatA subunits. Substrates initially bind to the TatABC complex, which probably triggers association of the separate TatA complex to form the active translocon.

It localises to the cell inner membrane. In terms of biological role, part of the twin-arginine translocation (Tat) system that transports large folded proteins containing a characteristic twin-arginine motif in their signal peptide across membranes. Together with TatC, TatB is part of a receptor directly interacting with Tat signal peptides. TatB may form an oligomeric binding site that transiently accommodates folded Tat precursor proteins before their translocation. The sequence is that of Sec-independent protein translocase protein TatB from Escherichia coli O157:H7.